Consider the following 134-residue polypeptide: Small ribosomal subunit protein uS11 (134 aa).

Belongs to the universal ribosomal protein uS11 family. As to quaternary structure, component of the small ribosomal subunit.

It is found in the cytoplasm. The polypeptide is Small ribosomal subunit protein uS11 (RPS14) (Encephalitozoon cuniculi (strain GB-M1) (Microsporidian parasite)).